The primary structure comprises 381 residues: Lipopolysaccharide 1,2-N-acetylglucosaminetransferase (381 aa).

It belongs to the glycosyltransferase group 1 family. Glycosyltransferase 4 subfamily.

The protein localises to the cell inner membrane. The catalysed reaction is UDP-N-acetyl-alpha-D-glucosamine + [lipopolysaccharide] = UDP + N-acetyl-alpha-D-glucosaminyl-[lipopolysaccharide].. It functions in the pathway bacterial outer membrane biogenesis; LPS core biosynthesis. In terms of biological role, transferase involved in the biosynthesis of the core oligosaccharide region of lipopolysaccharide (LPS). Catalyzes the addition of the terminal N-acetyl-D-glucosamine (GlcNAc) group to the outer-core glucose II, the last step of the lipid A-core oligosaccharide biosynthesis. The protein is Lipopolysaccharide 1,2-N-acetylglucosaminetransferase of Salmonella typhimurium (strain LT2 / SGSC1412 / ATCC 700720).